We begin with the raw amino-acid sequence, 998 residues long: Regulator of telomere elongation helicase 1 homolog (998 aa).

The Helicase ATP-binding domain occupies 7–324; sequence AGIPVHFPFE…KEMLLELEKA (318 aa). 42 to 49 is a binding site for ATP; it reads SPTGTGKT. [4Fe-4S] cluster contacts are provided by Cys148, Cys166, Cys175, and Cys211. The DEAH box motif lies at 254 to 257; sequence DEAH. A disordered region spans residues 426–454; it reads QNAGKPAPKQQQQGGWLGKGNNTSNSSSS. Thr887 is modified (phosphothreonine).

This sequence belongs to the helicase family. RAD3/XPD subfamily.

The protein localises to the nucleus. It carries out the reaction ATP + H2O = ADP + phosphate + H(+). Its function is as follows. A probable ATP-dependent DNA helicase implicated in DNA repair and the maintenance of genomic stability. Acts as an anti-recombinase to counteract toxic recombination and limit crossover during meiosis. Regulates meiotic recombination and crossover homeostasis by physically dissociating strand invasion events and thereby promotes noncrossover repair by meiotic synthesis dependent strand annealing (SDSA) as well as disassembly of D loop recombination intermediates. The chain is Regulator of telomere elongation helicase 1 homolog from Drosophila willistoni (Fruit fly).